Consider the following 141-residue polypeptide: Decarboxylase CPUR_05434 (141 aa).

The EthD domain occupies 26–121; the sequence is EGMSEEAYRN…MHDHEMFADT (96 aa).

The protein belongs to the tpcK family.

It catalyses the reaction atrochrysone carboxylate + H(+) = atrochrysone + CO2. In terms of biological role, decarboxylase; part of the ergochrome gene cluster responsible for the typical purple-black color of the ergot sclerotia. The ergochrome gene cluster produces several ergot pigments including the yellow ergochrome secalonic acid and its derivatives, as well as the red anthraquinones endocrocin and clavorubin. The pathway begins with the synthesis of atrochrysone thioester by the polyketide synthase (PKS) CPUR_05437. The atrochrysone carboxyl ACP thioesterase CPUR_05436 then breaks the thioester bond and releases the atrochrysone carboxylic acid from CPUR_05437. The decarboxylase CPUR_05434 then catalyzes the concerted decarboxylation-elimination required to convert atochrysone carboxylic acid into emodin anthrone, which is further oxidized to emodin by the anthrone oxygenase CPUR_05435. Emodin is further modified to yield monodictyphenone via several steps involving CPUR_05427, CPUR_05428, CPUR_05429 and CPUR_05430. The short chain dehydrogenase/reductase CPUR_05418 then catalyzes the C-5 ketoreduction to give the xanthone skeleton of the monomeric units. Ergochromes formation requires further dimerization steps of different xanthone units, probably catalyzed by the cytochrome P450 monooxygenase CPUR_05419. CPUR_05425, CPUR_05426 and CPUR_05431 are unique to Claviceps, thus it is likely that they are involved in further modification of xanthone units or in their dimerization. The yellow ergochromes and the red anthraquinone pigments endocrocin and clavorubin are products from the same PKS derived precursors and the latter are likely shunt products in the pathway of xanthone biosynthesis. It is proposed that atrochrysone carboxylic acid released from the PKS CPUR_05437 can also be converted to endocrocin anthrone which is further oxidized into endocrocin by CPUR_05435. Endocrocin could be then modified to clavorubin, possibly by CPUR_05423 and CPUR_05431. Clavorubin is the principal anthraquinone metabolite produced by the cluster with a much higher yield compared to endocrocin. This chain is Decarboxylase CPUR_05434, found in Claviceps purpurea (strain 20.1) (Ergot fungus).